The chain runs to 879 residues: Alanine--tRNA ligase (879 aa).

Zn(2+) is bound by residues His-566, His-570, Cys-668, and His-672.

This sequence belongs to the class-II aminoacyl-tRNA synthetase family. Zn(2+) serves as cofactor.

Its subcellular location is the cytoplasm. The enzyme catalyses tRNA(Ala) + L-alanine + ATP = L-alanyl-tRNA(Ala) + AMP + diphosphate. Catalyzes the attachment of alanine to tRNA(Ala) in a two-step reaction: alanine is first activated by ATP to form Ala-AMP and then transferred to the acceptor end of tRNA(Ala). Also edits incorrectly charged Ser-tRNA(Ala) and Gly-tRNA(Ala) via its editing domain. The chain is Alanine--tRNA ligase from Listeria welshimeri serovar 6b (strain ATCC 35897 / DSM 20650 / CCUG 15529 / CIP 8149 / NCTC 11857 / SLCC 5334 / V8).